A 79-amino-acid polypeptide reads, in one-letter code: Small proline-rich protein 4 (79 aa).

Low complexity predominate over residues 1–26 (MSSQQQQRQQQQCPPQRAQQQQVKQP). A disordered region spans residues 1–79 (MSSQQQQRQQ…AQQASKSKQK (79 aa)). The span at 66-79 (KCPSAQQASKSKQK) shows a compositional bias: polar residues.

Belongs to the cornifin (SPRR) family. Cross-linked to membrane proteins by transglutaminase.

The protein resides in the cytoplasm. It is found in the cell cortex. Cross-linked envelope protein of keratinocytes. Involved in UV-induced cornification. This is Small proline-rich protein 4 (SPRR4) from Homo sapiens (Human).